Consider the following 740-residue polypeptide: E3 ubiquitin-protein ligase WAV3 (740 aa).

The interval 14–105 is disordered; that stretch reads PRNSDAAAPD…AISNPSSPRS (92 aa). Over residues 49–67 the composition is skewed to low complexity; it reads SGGSNPSTPRSTSSPSLRC. Positions 71–90 are enriched in polar residues; the sequence is DAQTPTAEQTSTPRSATKSP. The segment at 122–167 adopts an RING-type; atypical zinc-finger fold; sequence CGICLNSVKTGQGTAKYTAECSHAFHFPCIADYVRKQGKLVCPVCN. A VWFA domain is found at 332 to 476; sequence DLVVVVDVGG…IPVTEHGFGE (145 aa). A disordered region spans residues 677–709; it reads QSQHQQQHNQRRRGSERETTTTMTLMDENGEPL.

In terms of assembly, interacts with SINAT1, SINAT2, SINAT3, SINAT4, SINAT5, TOR1/SPR2 and FIP2. Expressed in root tips and leaf primordia.

The catalysed reaction is S-ubiquitinyl-[E2 ubiquitin-conjugating enzyme]-L-cysteine + [acceptor protein]-L-lysine = [E2 ubiquitin-conjugating enzyme]-L-cysteine + N(6)-ubiquitinyl-[acceptor protein]-L-lysine.. Its function is as follows. E3 ubiquitin-protein ligase involved in the regulation of root growth. Acts as a positive regulator of root gravitropism. Possesses E3 protein ligase activity in vitro. This chain is E3 ubiquitin-protein ligase WAV3, found in Arabidopsis thaliana (Mouse-ear cress).